Consider the following 182-residue polypeptide: RNA pyrophosphohydrolase (182 aa).

Residues 6–149 enclose the Nudix hydrolase domain; that stretch reads GYRPNVGIIL…KRLVYEQALN (144 aa). A Nudix box motif is present at residues 38-59; it reads GGIKRGETPEEAMFRELYEEVG. Residues 162–182 form a disordered region; that stretch reads PRHKKEQEPFSDVVDSVRSEE.

It belongs to the Nudix hydrolase family. RppH subfamily. The cofactor is a divalent metal cation.

In terms of biological role, accelerates the degradation of transcripts by removing pyrophosphate from the 5'-end of triphosphorylated RNA, leading to a more labile monophosphorylated state that can stimulate subsequent ribonuclease cleavage. The protein is RNA pyrophosphohydrolase of Dechloromonas aromatica (strain RCB).